The sequence spans 246 residues: 14-3-3 protein eta (246 aa).

At glycine 2 the chain carries N-acetylglycine. Serine 25 and serine 59 each carry phosphoserine.

The protein belongs to the 14-3-3 family. As to quaternary structure, homodimer. Interacts with many nuclear hormone receptors and cofactors including AR, ESR1, ESR2, MC2R, NR3C1, NRIP1, PPARBP and THRA. Interacts with ABL1 (phosphorylated form); the interaction retains it in the cytoplasm. Interacts with ARHGEF28 and CDK16. Weakly interacts with CDKN1B. Interacts with GAB2. Interacts with KCNK18 in a phosphorylation-dependent manner. Interacts with SAMSN1. Interacts with the 'Ser-241' phosphorylated form of PDPK1. Interacts with the 'Thr-369' phosphorylated form of DAPK2. Interacts with PI4KB, TBC1D22A and TBC1D22B. Interacts with SLITRK1. Interacts with MEFV. Post-translationally, phosphorylated on Ser-59 by protein kinase C delta type catalytic subunit in a sphingosine-dependent fashion. As to expression, expressed mainly in the brain and present in other tissues albeit at lower levels.

Functionally, adapter protein implicated in the regulation of a large spectrum of both general and specialized signaling pathways. Binds to a large number of partners, usually by recognition of a phosphoserine or phosphothreonine motif. Binding generally results in the modulation of the activity of the binding partner. Negatively regulates the kinase activity of PDPK1. The protein is 14-3-3 protein eta (YWHAH) of Homo sapiens (Human).